Reading from the N-terminus, the 402-residue chain is MMVHCAGCERPILDRFLLNVLDRAWHIKCVQCCECKTNLSEKCFSREGKLYCKNDFFRRFGTKCAGCAQGISPSDLVRKARSKVFHLNCFTCMVCNKQLSTGEELYVIDENKFVCKDDYLSSSSLKEGSLNSVSSCTDRSLSPDLQDPLQDDPKETDNSTSSDKETANNENEEQNSGTKRRGPRTTIKAKQLETLKAAFAATPKPTRHIREQLAQETGLNMRVIQVWFQNRRSKERRMKQLSALGARRHAFFRSPRRMRPLGGRLDESEMLGSTPYTYYGDYQSDYYAPGGNYDFFAHGPPSQAQSPADSSFLAASGPGSTPLGALEPPLAGPHGADNPRFTDMISHPDTPSPEPGLPGALHPMPGEVFSGGPSPPFPMSGTSGYSGPLSHPNPELNEAAVW.

2 LIM zinc-binding domains span residues Val-3–Gly-61 and Thr-62–Leu-125. The segment covering Ser-124 to Pro-148 has biased composition (low complexity). Disordered regions lie at residues Ser-124–Thr-186 and His-298–Trp-402. Basic and acidic residues predominate over residues Asp-151–Ala-167. The segment at residues Arg-180 to Lys-239 is a DNA-binding region (homeobox). Low complexity-rich tracts occupy residues Pro-300–Ser-311 and Pro-322–Ala-336.

The protein localises to the nucleus. Its function is as follows. Plays an essential role in the regulation of neuronal differentiation and migration during development of the central nervous system. The protein is LIM/homeobox protein Lhx5 (Lhx5) of Mus musculus (Mouse).